Consider the following 788-residue polypeptide: Response regulator SSK1 (788 aa).

The Response regulatory domain occupies 534 to 691; that stretch reads NVLIVEDNII…WLERKVKEWG (158 aa). At Asp-583 the chain carries 4-aspartylphosphate.

This sequence belongs to the SSK1 family.

Its subcellular location is the cytoplasm. Functionally, two-domain response regulator protein in the two-component signal transduction system of the HOG1 pathway. Controls high-osmolarity adaptation and fungicide sensitivity via its regulation of the phosphorylation of HOG1. The polypeptide is Response regulator SSK1 (Cochliobolus heterostrophus (strain C5 / ATCC 48332 / race O) (Southern corn leaf blight fungus)).